Reading from the N-terminus, the 315-residue chain is MTIDSGFNHITVLLDEAVEALALRADGCYLDGTFGRGGHSRLILSKLGPQGRLLGFDKDPQAIATGQALAAEDGRFVIVQRSFAELGAEVAGRDLAGKVSGILLDLGVSSPQLDDPERGFSFLNDGPLDMRMNPNQGISAAEFIATAPVEEIARVFKEYGEERFAGRMARAVVERREKQPFTRTADLAEVLKVANPAWEKGKNPATRAFQGLRIHVNNELGDLETGLEAALDALEVGGRLAVISFHSLEDRIVKLFMRKLVKGEADNLPRNLPVQHKTFEPRIKLIGKAQFASEAELKANPRSRSAVMRVAEKLR.

S-adenosyl-L-methionine is bound by residues 37-39 (GGH), Asp-57, Phe-83, Asp-105, and Gln-112.

This sequence belongs to the methyltransferase superfamily. RsmH family.

It is found in the cytoplasm. It carries out the reaction cytidine(1402) in 16S rRNA + S-adenosyl-L-methionine = N(4)-methylcytidine(1402) in 16S rRNA + S-adenosyl-L-homocysteine + H(+). Its function is as follows. Specifically methylates the N4 position of cytidine in position 1402 (C1402) of 16S rRNA. This is Ribosomal RNA small subunit methyltransferase H from Pseudomonas entomophila (strain L48).